Here is a 180-residue protein sequence, read N- to C-terminus: NADH-ubiquinone oxidoreductase chain 5 (180 aa).

A helical membrane pass occupies residues 131–148 (VYHYAFAMLLGSTPFVTF).

It belongs to the complex I subunit 5 family.

It is found in the mitochondrion inner membrane. It catalyses the reaction a ubiquinone + NADH + 5 H(+)(in) = a ubiquinol + NAD(+) + 4 H(+)(out). Core subunit of the mitochondrial membrane respiratory chain NADH dehydrogenase (Complex I) that is believed to belong to the minimal assembly required for catalysis. Complex I functions in the transfer of electrons from NADH to the respiratory chain. The immediate electron acceptor for the enzyme is believed to be ubiquinone. This Zea mays (Maize) protein is NADH-ubiquinone oxidoreductase chain 5 (ND5).